A 109-amino-acid polypeptide reads, in one-letter code: Nucleoid-associated protein YbaB (109 aa).

The protein belongs to the YbaB/EbfC family. Homodimer.

It is found in the cytoplasm. It localises to the nucleoid. Binds to DNA and alters its conformation. May be involved in regulation of gene expression, nucleoid organization and DNA protection. The polypeptide is Nucleoid-associated protein YbaB (Escherichia coli O127:H6 (strain E2348/69 / EPEC)).